Reading from the N-terminus, the 86-residue chain is Large ribosomal subunit protein bL27 (86 aa).

Positions 1–21 (MAHKKAAGSSRNGRDSESKRL) are disordered.

This sequence belongs to the bacterial ribosomal protein bL27 family.

This chain is Large ribosomal subunit protein bL27, found in Hahella chejuensis (strain KCTC 2396).